A 344-amino-acid chain; its full sequence is Protein RecA (344 aa).

An ATP-binding site is contributed by 65 to 72 (GPESSGKT).

The protein belongs to the RecA family.

It is found in the cytoplasm. Can catalyze the hydrolysis of ATP in the presence of single-stranded DNA, the ATP-dependent uptake of single-stranded DNA by duplex DNA, and the ATP-dependent hybridization of homologous single-stranded DNAs. It interacts with LexA causing its activation and leading to its autocatalytic cleavage. This is Protein RecA from Campylobacter lari.